A 250-amino-acid chain; its full sequence is Functional amyloid sbunit FapE (250 aa).

A signal peptide spans 1–27 (MLREHAMYTHHCFVLACCLGAALPAPA).

It belongs to the FapE family. As to quaternary structure, a minor component of purified amyloid fibrils. Fibrils are resistant to boiling in 2% (weight/vol) SDS and require &gt;90% (vol/vol) formic acid to dissolve.

It localises to the fimbrium. The protein resides in the secreted. A minor component of the functional amyloid in this bacterium. Upon overexpression of the endogenous six-gene locus (fapA-fapF), cells form large clumps during liquid growth, make large amounts of biofilm and produce amyloid fibrils. This is Functional amyloid sbunit FapE from Pseudomonas aeruginosa (strain ATCC 15692 / DSM 22644 / CIP 104116 / JCM 14847 / LMG 12228 / 1C / PRS 101 / PAO1).